Reading from the N-terminus, the 233-residue chain is Probable cyclic nucleotide phosphodiesterase COSY_0614 (233 aa).

The Fe cation site is built by Asp10, His12, Asp48, Asn78, His144, His183, and His185. Residues His12, Asp48, and Asn78–His79 contribute to the AMP site. His185 lines the AMP pocket.

Belongs to the cyclic nucleotide phosphodiesterase class-III family. Fe(2+) is required as a cofactor.

This is Probable cyclic nucleotide phosphodiesterase COSY_0614 from Vesicomyosocius okutanii subsp. Calyptogena okutanii (strain HA).